A 372-amino-acid polypeptide reads, in one-letter code: Cytochrome b (372 aa).

A run of 4 helical transmembrane segments spans residues 25–45, 69–90, 105–125, and 170–190; these read FGSM…FLAI, WTMQ…YIHI, WLSG…GYVL, and FFAL…IHII. Heme b-binding residues include histidine 75 and histidine 89. Positions 174 and 188 each coordinate heme b. Residue histidine 193 participates in a ubiquinone binding. The next 4 membrane-spanning stretches (helical) occupy residues 218–238, 280–300, 312–332, and 339–358; these read YKDM…LSFS, LGGT…PFTH, LTQI…WTAT, and FIII…IMNP.

It belongs to the cytochrome b family. As to quaternary structure, the cytochrome bc1 complex contains 3 respiratory subunits (MT-CYB, CYC1 and UQCRFS1), 2 core proteins (UQCRC1 and UQCRC2) and probably 6 low-molecular weight proteins. It depends on heme b as a cofactor.

Its subcellular location is the mitochondrion inner membrane. Its function is as follows. Component of the ubiquinol-cytochrome c reductase complex (complex III or cytochrome b-c1 complex) that is part of the mitochondrial respiratory chain. The b-c1 complex mediates electron transfer from ubiquinol to cytochrome c. Contributes to the generation of a proton gradient across the mitochondrial membrane that is then used for ATP synthesis. This chain is Cytochrome b (MT-CYB), found in Ophiophagus hannah (King cobra).